We begin with the raw amino-acid sequence, 197 residues long: Small ribosomal subunit protein uS7 (197 aa).

The protein belongs to the universal ribosomal protein uS7 family. Part of the 30S ribosomal subunit.

One of the primary rRNA binding proteins, it binds directly to 16S rRNA where it nucleates assembly of the head domain of the 30S subunit. Is located at the subunit interface close to the decoding center. The polypeptide is Small ribosomal subunit protein uS7 (Methanopyrus kandleri (strain AV19 / DSM 6324 / JCM 9639 / NBRC 100938)).